Here is a 209-residue protein sequence, read N- to C-terminus: A-type ATP synthase subunit D (209 aa).

This sequence belongs to the V-ATPase D subunit family. Has multiple subunits with at least A(3), B(3), C, D, E, F, H, I and proteolipid K(x).

Its subcellular location is the cell membrane. In terms of biological role, component of the A-type ATP synthase that produces ATP from ADP in the presence of a proton gradient across the membrane. The polypeptide is A-type ATP synthase subunit D (Archaeoglobus fulgidus (strain ATCC 49558 / DSM 4304 / JCM 9628 / NBRC 100126 / VC-16)).